Consider the following 248-residue polypeptide: MSETARTTIDQSEVDRFSAMAAEWWDPTGKFRPLHKFNPVRLAYIRDKVCEQFGRDPKSPQPLKGLRLLDIGCGGGLLSEPMARMGADVLGADASEKNIGIARTHAAGSGVNVDYRAVTAEALAEAGESFDIVLNMEVVEHVADVDFFMTTCAHMVRPGGLMFVATINRTLKAAALAIFAAENVLRWLPRGTHQYEKLVRPEELEKPLEASGMQVTDRTGVFFNPLANQWNLSKDMDVNYMIVAKRPL.

S-adenosyl-L-methionine is bound by residues Arg-41, Gly-72, Asp-93, and Met-136.

It belongs to the methyltransferase superfamily. UbiG/COQ3 family.

The enzyme catalyses a 3-demethylubiquinol + S-adenosyl-L-methionine = a ubiquinol + S-adenosyl-L-homocysteine + H(+). It catalyses the reaction a 3-(all-trans-polyprenyl)benzene-1,2-diol + S-adenosyl-L-methionine = a 2-methoxy-6-(all-trans-polyprenyl)phenol + S-adenosyl-L-homocysteine + H(+). It participates in cofactor biosynthesis; ubiquinone biosynthesis. O-methyltransferase that catalyzes the 2 O-methylation steps in the ubiquinone biosynthetic pathway. The chain is Ubiquinone biosynthesis O-methyltransferase from Sinorhizobium fredii (strain NBRC 101917 / NGR234).